A 109-amino-acid polypeptide reads, in one-letter code: Elongin-C (109 aa).

The protein belongs to the SKP1 family.

The protein resides in the nucleus. Its function is as follows. SIII, also known as elongin, is a general transcription elongation factor that increases the RNA polymerase II transcription elongation past template-encoded arresting sites. Subunit A is transcriptionally active and its transcription activity is strongly enhanced by binding to the dimeric complex of the SIII regulatory subunits B and C (elongin BC complex). The elongin BC complex seems to be involved as an adapter protein in the proteasomal degradation of target proteins via different E3 ubiquitin ligase complexes. The protein is Elongin-C (tceb1) of Dictyostelium discoideum (Social amoeba).